The sequence spans 466 residues: Phosphoenolpyruvate carboxykinase (ATP) (466 aa).

Substrate contacts are provided by R61, Y196, and K202. Residues K202, H221, and 237–245 contribute to the ATP site; that span reads GLSGTGKTT. 2 residues coordinate Mn(2+): K202 and H221. D258 is a Mn(2+) binding site. ATP contacts are provided by E286, R323, and T448. Substrate is bound at residue R323.

The protein belongs to the phosphoenolpyruvate carboxykinase (ATP) family. Requires Mn(2+) as cofactor.

The protein resides in the cytoplasm. The enzyme catalyses oxaloacetate + ATP = phosphoenolpyruvate + ADP + CO2. It participates in carbohydrate biosynthesis; gluconeogenesis. Functionally, involved in the gluconeogenesis. Catalyzes the conversion of oxaloacetate (OAA) to phosphoenolpyruvate (PEP) through direct phosphoryl transfer between the nucleoside triphosphate and OAA. The protein is Phosphoenolpyruvate carboxykinase (ATP) of Deinococcus radiodurans (strain ATCC 13939 / DSM 20539 / JCM 16871 / CCUG 27074 / LMG 4051 / NBRC 15346 / NCIMB 9279 / VKM B-1422 / R1).